The chain runs to 429 residues: Asparagine--tRNA ligase (429 aa).

This sequence belongs to the class-II aminoacyl-tRNA synthetase family. As to quaternary structure, homodimer.

The protein localises to the cytoplasm. It catalyses the reaction tRNA(Asn) + L-asparagine + ATP = L-asparaginyl-tRNA(Asn) + AMP + diphosphate + H(+). The chain is Asparagine--tRNA ligase from Desulforamulus reducens (strain ATCC BAA-1160 / DSM 100696 / MI-1) (Desulfotomaculum reducens).